The chain runs to 388 residues: Xylose isomerase (388 aa).

Residues H54 and D57 contribute to the active site. 7 residues coordinate Mg(2+): E181, E217, H220, D245, D255, D257, and D287.

It belongs to the xylose isomerase family. As to quaternary structure, homotetramer. Mg(2+) is required as a cofactor.

The protein resides in the cytoplasm. It catalyses the reaction alpha-D-xylose = alpha-D-xylulofuranose. This chain is Xylose isomerase, found in Streptomyces olivaceoviridis (Streptomyces corchorusii).